The sequence spans 467 residues: Glutamine synthetase (467 aa).

A GS beta-grasp domain is found at 11 to 95 (HDVKWIDLRF…IVCDIIEPST (85 aa)). Residues 103–467 (PRAIARRAEE…PLEYDLYYSV (365 aa)) enclose the GS catalytic domain. Positions 128 and 130 each coordinate Mg(2+). Position 206 (glutamate 206) interacts with ATP. Mg(2+)-binding residues include glutamate 211 and glutamate 219. L-glutamate is bound by residues 263–264 (NG) and glycine 264. Histidine 268 contributes to the Mg(2+) binding site. ATP-binding positions include 270–272 (HMS) and serine 272. L-glutamate contacts are provided by arginine 320, glutamate 326, and arginine 338. ATP contacts are provided by arginine 338, arginine 343, and lysine 351. Residue glutamate 356 coordinates Mg(2+). Arginine 358 is an L-glutamate binding site. Tyrosine 396 carries the O-AMP-tyrosine modification.

It belongs to the glutamine synthetase family. As to quaternary structure, oligomer of 12 subunits arranged in the form of two hexameric ring. The cofactor is Mg(2+).

It localises to the cytoplasm. The enzyme catalyses L-glutamate + NH4(+) + ATP = L-glutamine + ADP + phosphate + H(+). Its activity is regulated as follows. The activity of this enzyme could be controlled by adenylation under conditions of abundant glutamine. In terms of biological role, catalyzes the ATP-dependent biosynthesis of glutamine from glutamate and ammonia. This chain is Glutamine synthetase, found in Azotobacter vinelandii.